A 201-amino-acid polypeptide reads, in one-letter code: Ribonuclease HII (201 aa).

The RNase H type-2 domain occupies 12–201 (GIVCGIDEVG…FAPVAQYMLF (190 aa)). A divalent metal cation is bound by residues Asp-18, Glu-19, and Asp-113.

The protein belongs to the RNase HII family. Mn(2+) is required as a cofactor. The cofactor is Mg(2+).

The protein localises to the cytoplasm. The catalysed reaction is Endonucleolytic cleavage to 5'-phosphomonoester.. Its function is as follows. Endonuclease that specifically degrades the RNA of RNA-DNA hybrids. The sequence is that of Ribonuclease HII (rnhB) from Paramagnetospirillum magneticum (strain ATCC 700264 / AMB-1) (Magnetospirillum magneticum).